Consider the following 381-residue polypeptide: Chaperone protein DnaJ (381 aa).

One can recognise a J domain in the interval 5–73; that stretch reads DYYEVLGVGK…EKKAAYDQYG (69 aa). The CR-type zinc-finger motif lies at 141–219; sequence GHEAQIRVPH…CHGQGKLKSQ (79 aa). Residues C154, C157, C171, C174, C193, C196, C207, and C210 each coordinate Zn(2+). CXXCXGXG motif repeat units lie at residues 154 to 161, 171 to 178, 193 to 200, and 207 to 214; these read CDHCHGNG, CPTCHGAG, CPKCHGSG, and CTKCHGQG. Residues 357 to 381 are disordered; it reads SVHEGGSRHSPQEQSWLDKVKSFFS.

It belongs to the DnaJ family. Homodimer. It depends on Zn(2+) as a cofactor.

Its subcellular location is the cytoplasm. Functionally, participates actively in the response to hyperosmotic and heat shock by preventing the aggregation of stress-denatured proteins and by disaggregating proteins, also in an autonomous, DnaK-independent fashion. Unfolded proteins bind initially to DnaJ; upon interaction with the DnaJ-bound protein, DnaK hydrolyzes its bound ATP, resulting in the formation of a stable complex. GrpE releases ADP from DnaK; ATP binding to DnaK triggers the release of the substrate protein, thus completing the reaction cycle. Several rounds of ATP-dependent interactions between DnaJ, DnaK and GrpE are required for fully efficient folding. Also involved, together with DnaK and GrpE, in the DNA replication of plasmids through activation of initiation proteins. The sequence is that of Chaperone protein DnaJ from Cupriavidus necator (strain ATCC 17699 / DSM 428 / KCTC 22496 / NCIMB 10442 / H16 / Stanier 337) (Ralstonia eutropha).